The sequence spans 651 residues: Acetyl-coenzyme A synthetase (651 aa).

CoA is bound by residues 191–194, Thr-311, and Asn-335; that span reads RGGK. ATP contacts are provided by residues 387–389, 411–416, Asp-500, and Arg-515; these read GEP and DTWWQT. Residue Ser-523 coordinates CoA. An ATP-binding site is contributed by Arg-526. Mg(2+) is bound by residues Val-537, His-539, and Val-542. Arg-584 is a CoA binding site. Lys-609 is subject to N6-acetyllysine.

It belongs to the ATP-dependent AMP-binding enzyme family. Mg(2+) serves as cofactor. Acetylated. Deacetylation by the SIR2-homolog deacetylase activates the enzyme.

The enzyme catalyses acetate + ATP + CoA = acetyl-CoA + AMP + diphosphate. Its function is as follows. Catalyzes the conversion of acetate into acetyl-CoA (AcCoA), an essential intermediate at the junction of anabolic and catabolic pathways. AcsA undergoes a two-step reaction. In the first half reaction, AcsA combines acetate with ATP to form acetyl-adenylate (AcAMP) intermediate. In the second half reaction, it can then transfer the acetyl group from AcAMP to the sulfhydryl group of CoA, forming the product AcCoA. This chain is Acetyl-coenzyme A synthetase, found in Pseudomonas syringae pv. tomato (strain ATCC BAA-871 / DC3000).